Here is a 290-residue protein sequence, read N- to C-terminus: 6-carboxyhexanoate--CoA ligase (290 aa).

Belongs to the BioW family. In terms of assembly, homodimer. Mg(2+) is required as a cofactor.

The catalysed reaction is heptanedioate + ATP + CoA = 6-carboxyhexanoyl-CoA + AMP + diphosphate. The protein operates within metabolic intermediate metabolism; pimeloyl-CoA biosynthesis; pimeloyl-CoA from pimelate: step 1/1. In terms of biological role, catalyzes the transformation of pimelate into pimeloyl-CoA with concomitant hydrolysis of ATP to AMP. This Bacillus amyloliquefaciens (Bacillus velezensis) protein is 6-carboxyhexanoate--CoA ligase.